Consider the following 124-residue polypeptide: Small ribosomal subunit protein uS12 (124 aa).

Residues 1 to 28 (MPTISQLVGSERKRLTKKTKSPALKSCP) are disordered. D89 carries the 3-methylthioaspartic acid modification. The tract at residues 104–124 (TAGVKDRRQSRSKYGAKAPKD) is disordered.

The protein belongs to the universal ribosomal protein uS12 family. Part of the 30S ribosomal subunit. Contacts proteins S8 and S17. May interact with IF1 in the 30S initiation complex.

Functionally, with S4 and S5 plays an important role in translational accuracy. Interacts with and stabilizes bases of the 16S rRNA that are involved in tRNA selection in the A site and with the mRNA backbone. Located at the interface of the 30S and 50S subunits, it traverses the body of the 30S subunit contacting proteins on the other side and probably holding the rRNA structure together. The combined cluster of proteins S8, S12 and S17 appears to hold together the shoulder and platform of the 30S subunit. The polypeptide is Small ribosomal subunit protein uS12 (Prochlorococcus marinus (strain MIT 9301)).